Consider the following 393-residue polypeptide: Putative serpin-Z6A (393 aa).

The segment at 336-360 (GTEAAAATAVLMEGAARYAPPPPPR) is RCL.

Belongs to the serpin family.

Its function is as follows. Probable serine protease inhibitor. The polypeptide is Putative serpin-Z6A (Oryza sativa subsp. japonica (Rice)).